The primary structure comprises 380 residues: Chaperone protein DnaJ (380 aa).

One can recognise a J domain in the interval 5–69 (DYYEILGVSK…QKRAHYDQFG (65 aa)). Residues 135–217 (GKETDIEIPR…CGGTGRVKKR (83 aa)) form a CR-type zinc finger. Zn(2+)-binding residues include Cys148, Cys151, Cys165, Cys168, Cys191, Cys194, Cys205, and Cys208. CXXCXGXG motif repeat units lie at residues 148–155 (CDTCHGTG), 165–172 (CSYCHGTG), 191–198 (CPYCGGTG), and 205–212 (CTTCGGTG).

This sequence belongs to the DnaJ family. Homodimer. The cofactor is Zn(2+).

It is found in the cytoplasm. In terms of biological role, participates actively in the response to hyperosmotic and heat shock by preventing the aggregation of stress-denatured proteins and by disaggregating proteins, also in an autonomous, DnaK-independent fashion. Unfolded proteins bind initially to DnaJ; upon interaction with the DnaJ-bound protein, DnaK hydrolyzes its bound ATP, resulting in the formation of a stable complex. GrpE releases ADP from DnaK; ATP binding to DnaK triggers the release of the substrate protein, thus completing the reaction cycle. Several rounds of ATP-dependent interactions between DnaJ, DnaK and GrpE are required for fully efficient folding. Also involved, together with DnaK and GrpE, in the DNA replication of plasmids through activation of initiation proteins. The sequence is that of Chaperone protein DnaJ from Geobacillus sp. (strain WCH70).